A 1409-amino-acid polypeptide reads, in one-letter code: DNA-directed RNA polymerase subunit beta' (1409 aa).

Residues cysteine 70, cysteine 72, cysteine 85, and cysteine 88 each coordinate Zn(2+). Mg(2+) contacts are provided by aspartate 460, aspartate 462, and aspartate 464. Residues cysteine 822, cysteine 896, cysteine 903, and cysteine 906 each coordinate Zn(2+).

It belongs to the RNA polymerase beta' chain family. The RNAP catalytic core consists of 2 alpha, 1 beta, 1 beta' and 1 omega subunit. When a sigma factor is associated with the core the holoenzyme is formed, which can initiate transcription. The cofactor is Mg(2+). It depends on Zn(2+) as a cofactor.

It catalyses the reaction RNA(n) + a ribonucleoside 5'-triphosphate = RNA(n+1) + diphosphate. In terms of biological role, DNA-dependent RNA polymerase catalyzes the transcription of DNA into RNA using the four ribonucleoside triphosphates as substrates. The polypeptide is DNA-directed RNA polymerase subunit beta' (Methylobacillus flagellatus (strain ATCC 51484 / DSM 6875 / VKM B-1610 / KT)).